A 144-amino-acid polypeptide reads, in one-letter code: 6-pyruvoyl tetrahydrobiopterin synthase (144 aa).

Residues methionine 1–alanine 4 constitute a propeptide that is removed on maturation. Residue serine 18 is modified to Phosphoserine. Histidine 23 contributes to the Zn(2+) binding site. Phosphoserine is present on serine 27. Cysteine 42 serves as the catalytic Proton acceptor. Residues histidine 48 and histidine 50 each contribute to the Zn(2+) site. The active-site Charge relay system is histidine 89. Phosphotyrosine is present on tyrosine 127. The active-site Charge relay system is the glutamate 133.

The protein belongs to the PTPS family. In terms of assembly, homohexamer formed of two homotrimers in a head to head fashion. Zn(2+) is required as a cofactor. In terms of processing, phosphorylation of Ser-18 is required for maximal enzyme activity.

It catalyses the reaction 7,8-dihydroneopterin 3'-triphosphate = 6-pyruvoyl-5,6,7,8-tetrahydropterin + triphosphate + H(+). It functions in the pathway cofactor biosynthesis; tetrahydrobiopterin biosynthesis; tetrahydrobiopterin from 7,8-dihydroneopterin triphosphate: step 1/3. Its function is as follows. Involved in the biosynthesis of tetrahydrobiopterin, an essential cofactor of aromatic amino acid hydroxylases. Catalyzes the transformation of 7,8-dihydroneopterin triphosphate into 6-pyruvoyl tetrahydropterin. This is 6-pyruvoyl tetrahydrobiopterin synthase (Pts) from Rattus norvegicus (Rat).